The sequence spans 145 residues: MGIGCWRNPLLLLIALVLSAKLGHFQRWEGFQQKLMSKKNMNSTLNFFIQSYNNASNDTYLYRVQRLIRSQMQLTTGVEYIVTVKIGWTKCKRNDTSNSSCPLQSKKLRKSLICESLIYTMPWINYFQLWNNSCLEAEHVGRNLR.

A signal peptide spans 1–19; sequence MGIGCWRNPLLLLIALVLS. In terms of domain architecture, Cystatin spans 37 to 115; sequence SKKNMNSTLN…KKLRKSLICE (79 aa). Asn-42 is a glycosylation site (N-linked (GlcNAc...) asparagine). 2 disulfides stabilise this stretch: Cys-91/Cys-101 and Cys-114/Cys-134.

The protein belongs to the cystatin family.

The protein localises to the secreted. This Homo sapiens (Human) protein is Cystatin-like 1 (CSTL1).